Here is a 94-residue protein sequence, read N- to C-terminus: Small ribosomal subunit protein uS19 (94 aa).

The protein belongs to the universal ribosomal protein uS19 family.

Functionally, protein S19 forms a complex with S13 that binds strongly to the 16S ribosomal RNA. The polypeptide is Small ribosomal subunit protein uS19 (Wolbachia pipientis subsp. Culex pipiens (strain wPip)).